Here is a 213-residue protein sequence, read N- to C-terminus: Large ribosomal subunit protein uL3 (213 aa).

Gln-151 carries the post-translational modification N5-methylglutamine.

This sequence belongs to the universal ribosomal protein uL3 family. Part of the 50S ribosomal subunit. Forms a cluster with proteins L14 and L19. Post-translationally, methylated by PrmB.

Its function is as follows. One of the primary rRNA binding proteins, it binds directly near the 3'-end of the 23S rRNA, where it nucleates assembly of the 50S subunit. The polypeptide is Large ribosomal subunit protein uL3 (Rhizobium etli (strain ATCC 51251 / DSM 11541 / JCM 21823 / NBRC 15573 / CFN 42)).